We begin with the raw amino-acid sequence, 144 residues long: Urease accessory protein UreE (144 aa).

Belongs to the UreE family.

It is found in the cytoplasm. In terms of biological role, involved in urease metallocenter assembly. Binds nickel. Probably functions as a nickel donor during metallocenter assembly. In Thermosynechococcus vestitus (strain NIES-2133 / IAM M-273 / BP-1), this protein is Urease accessory protein UreE.